Consider the following 256-residue polypeptide: Acetylglutamate kinase (256 aa).

Substrate-binding positions include 40–41, Arg62, and Asn153; that span reads GG.

It belongs to the acetylglutamate kinase family. ArgB subfamily.

It localises to the cytoplasm. The catalysed reaction is N-acetyl-L-glutamate + ATP = N-acetyl-L-glutamyl 5-phosphate + ADP. It participates in amino-acid biosynthesis; L-arginine biosynthesis; N(2)-acetyl-L-ornithine from L-glutamate: step 2/4. In terms of biological role, catalyzes the ATP-dependent phosphorylation of N-acetyl-L-glutamate. The sequence is that of Acetylglutamate kinase from Bacillus cytotoxicus (strain DSM 22905 / CIP 110041 / 391-98 / NVH 391-98).